The sequence spans 425 residues: Histidine--tRNA ligase (425 aa).

This sequence belongs to the class-II aminoacyl-tRNA synthetase family. As to quaternary structure, homodimer.

Its subcellular location is the cytoplasm. The enzyme catalyses tRNA(His) + L-histidine + ATP = L-histidyl-tRNA(His) + AMP + diphosphate + H(+). This is Histidine--tRNA ligase from Listeria monocytogenes serovar 1/2a (strain ATCC BAA-679 / EGD-e).